Here is a 301-residue protein sequence, read N- to C-terminus: HTH-type transcriptional activator NagR (301 aa).

The HTH lysR-type domain occupies 6 to 63 (IDLNLLVVFNQLLLDRSVSTAGEKLGLTQPAVSNSLKRLRAALKDDLFLRTSKGMEPT). A DNA-binding region (H-T-H motif) is located at residues 23-42 (VSTAGEKLGLTQPAVSNSLK).

Belongs to the LysR transcriptional regulatory family.

Its function is as follows. May regulate the expression of the naphthalene (nagA-F) and salicylate (nagG-M) metabolism genes. This chain is HTH-type transcriptional activator NagR, found in Ralstonia sp.